The primary structure comprises 214 residues: Cell division protein DamX (214 aa).

2 stretches are compositionally biased toward polar residues: residues 1-14 (GSGT…QPQQ) and 43-53 (QGMTGAASTLP). The segment at 1–133 (GSGTPTEAQT…SVQSAPGSHY (133 aa)) is disordered. Residues 44-65 (GMTGAASTLPTAPATVMSGAAA) traverse the membrane as a helical segment. Low complexity-rich tracts occupy residues 78–97 (QQHK…TQHK) and 110–131 (SSTA…APGS). Residues 127–204 (SAPGSHYTLQ…VQAKKPWVRP (78 aa)) form the SPOR domain.

This sequence belongs to the DamX family.

It localises to the cell inner membrane. In terms of biological role, non-essential cell division protein. The sequence is that of Cell division protein DamX from Serratia marcescens.